The following is a 322-amino-acid chain: Mas-related G-protein coupled receptor member X3 (322 aa).

Over Met-1–Thr-31 the chain is Extracellular. A helical transmembrane segment spans residues Val-32 to Leu-52. At Gly-53–Ala-60 the chain is on the cytoplasmic side. A helical membrane pass occupies residues Val-61–Val-81. Topologically, residues Arg-82–Lys-96 are extracellular. A helical membrane pass occupies residues Ile-97–Ser-117. The Cytoplasmic portion of the chain corresponds to Thr-118–Ser-139. A helical transmembrane segment spans residues Val-140–Phe-160. Over Cys-161–Asp-177 the chain is Extracellular. Residues Phe-178–Leu-198 form a helical membrane-spanning segment. Topologically, residues Leu-199–Arg-213 are cytoplasmic. A helical membrane pass occupies residues Leu-214–Ile-234. Topologically, residues Gln-235 to His-254 are extracellular. A helical membrane pass occupies residues Leu-255 to Val-275. Topologically, residues Gly-276–Gln-322 are cytoplasmic.

The protein belongs to the G-protein coupled receptor 1 family. Mas subfamily.

Its subcellular location is the cell membrane. Orphan receptor. Probably involved in the function of nociceptive neurons. May regulate nociceptor function and/or development, including the sensation or modulation of pain. Potently activated by enkephalins. The chain is Mas-related G-protein coupled receptor member X3 (MRGPRX3) from Macaca mulatta (Rhesus macaque).